The following is an 84-amino-acid chain: MGGLQPWHWLIVIAVFVLLFGAKKLPDAARSLGKSMRIFKSEIKEMQSDSNAAKSDQPEQITSERVVVDPSTQSTSSNSDKRPA.

The helical transmembrane segment at 1–21 threads the bilayer; sequence MGGLQPWHWLIVIAVFVLLFG. The interval 46 to 84 is disordered; that stretch reads MQSDSNAAKSDQPEQITSERVVVDPSTQSTSSNSDKRPA. Positions 48–63 are enriched in polar residues; the sequence is SDSNAAKSDQPEQITS.

This sequence belongs to the TatA/E family. In terms of assembly, the Tat system comprises two distinct complexes: a TatABC complex, containing multiple copies of TatA, TatB and TatC subunits, and a separate TatA complex, containing only TatA subunits. Substrates initially bind to the TatABC complex, which probably triggers association of the separate TatA complex to form the active translocon.

It localises to the cell membrane. Part of the twin-arginine translocation (Tat) system that transports large folded proteins containing a characteristic twin-arginine motif in their signal peptide across membranes. TatA could form the protein-conducting channel of the Tat system. The polypeptide is Sec-independent protein translocase protein TatA (Mycolicibacterium gilvum (strain PYR-GCK) (Mycobacterium gilvum (strain PYR-GCK))).